Reading from the N-terminus, the 168-residue chain is Cofilin-1-A (168 aa).

An N-acetylalanine modification is found at alanine 2. The ADF-H domain occupies 4-153 (GVMVSDDVIK…NDPCNLADKL (150 aa)). The Nuclear localization signal signature appears at 30–34 (KKRKK).

The protein belongs to the actin-binding proteins ADF family. Post-translationally, inactive when phosphorylated. Phosphorylation levels vary during development. Oocytes contain only the phosphorylated form, and 80-95% of cfl1 protein is phosphorylated in unfertilized eggs. Rapid dephosphorylation occurs within 30 minutes after fertilization. Phosphorylation levels increase again between the morula and blastula stages (5-8 hpf) and then decrease again as gastrulation approaches. Dephosphorylated by pdxp. Expressed diffusely in both animal and vegetal hemispheres of the oocyte. During cleavage, expression accumulates around the cleavage furrow, along the vegetal membrane, and later in the midbody. Strongly expressed in the animal hemisphere during blastula stages, with most cells showing expression by gastrulation. By stage 17, expression is highest in cells of the developing neuroectoderm, and at stage 24 the notochord, neural tube, neural crest, somites and some cells of the archenteron show high expression. By stage 35, expression has declined in the notochord, but remains in the neural tube, epidermis and a layer of cells in the archenteron. Also highly expressed in the retina and neuronal cell bodies at the base of the cement gland but not the cement gland itself. At stage 38, expression is widespread, being highest in the nervous system and retina. In the adult, expression is high in the brain, heart, oocyte, stomach, and low in skeletal muscle.

Its subcellular location is the nucleus matrix. The protein resides in the cytoplasm. It is found in the cytoskeleton. The protein localises to the cell cortex. It localises to the membrane. May play a role in the regulation of cell morphology and cytoskeletal organization. Binds to F-actin and exhibits pH-sensitive F-actin depolymerizing activity. Required for formation of the cleavage furrow during cytokinesis. The polypeptide is Cofilin-1-A (cfl1-a) (Xenopus laevis (African clawed frog)).